The following is an 836-amino-acid chain: MTATAEVETPKMEKSASKEEKQQPKQDSTEQGNADSEEWMSSESDPEQISLKSSDNSKSCQPRDGQLKKKEMHSKPHRQLCRSPCLDRPSFSQSSILQDGKLDLEKEYQAKMEFALKLGYAEEQIQSVLNKLGPESLINDVLAELVRLGNKGDSEGQINLSLLVPRGPSSREIASPELSLEDEIDNSDNLRPVVIDGSNVAMSHGNKEEFSCRGIQLAVDWFLDKGHKDITVFVPAWRKEQSRPDAPITDQDILRKLEKEKILVFTPSRRVQGRRVVCYDDRFIVKLAFDSDGIIVSNDNYRDLQVEKPEWKKFIEERLLMYSFVNDKFMPPDDPLGRHGPSLENFLRKRPIVPEHKKQPCPYGKKCTYGHKCKYYHPERANQPQRSVADELRISAKLSTVKTMSEGTLAKCGTGMSSAKGEITSEVKRVAPKRQSDPSIRSVAMEPEEWLSIARKPEASSVPSLVTALSVPTIPPPKSHAVGALNTRSASSPVPGSSHFPHQKASLEHMASMQYPPILVTNSHGTPISYAEQYPKFESMGDHGYYSMLGDFSKLNINSMHNREYYMAEVDRGVYARNPNLCSDSRVSHTRNDNYSSYNNVYLAVADTHPEGNLKLHRSASQNRLQPFPHGYHEALTRVQSYGPEDSKQGPHKQSVPHLALHAQHPSTGTRSSCPADYPMPPNIHPGATPQPGRALVMTRMDSISDSRLYESNPVRQRRPPLCREQHASWDPLPCTTDSYGYHSYPLSNSLMQPCYEPVMVRSVPEKMEQLWRNPWVGMCNDSREHMIPEHQYQTYKNLCNIFPSNIVLAVMEKNPHTADAQQLAALIVAKLRAAR.

Residues 1–92 (MTATAEVETP…SPCLDRPSFS (92 aa)) form a disordered region. Over residues 8 to 28 (ETPKMEKSASKEEKQQPKQDS) the composition is skewed to basic and acidic residues. A compositionally biased stretch (acidic residues) spans 35–46 (DSEEWMSSESDP). Residues 50-60 (SLKSSDNSKSC) show a composition bias toward polar residues. Residues 70-80 (KEMHSKPHRQL) are compositionally biased toward basic residues. One can recognise an RNase NYN domain in the interval 190–345 (LRPVVIDGSN…LGRHGPSLEN (156 aa)). The C3H1-type zinc finger occupies 355–380 (EHKKQPCPYGKKCTYGHKCKYYHPER).

The protein belongs to the ZC3H12 family. The cofactor is Mg(2+).

May function as RNase and regulate the levels of target RNA species. The protein is Probable ribonuclease ZC3H12B (ZC3H12B) of Homo sapiens (Human).